A 347-amino-acid chain; its full sequence is GTPase Obg (347 aa).

The region spanning 1-159 is the Obg domain; that stretch reads MQFLDQAKIY…AWVWLRLKLL (159 aa). The segment at 124–144 is disordered; the sequence is GRGNASYKSSTNRAPRQHGPG. The 168-residue stretch at 160–327 folds into the OBG-type G domain; the sequence is ADVGLVGLPN…ILDQLITMTG (168 aa). Residues 166-173, 191-195, 212-215, 279-282, and 308-310 contribute to the GTP site; these read GLPNAGKS, FTTLH, DIPG, NKID, and SGA. The Mg(2+) site is built by Ser173 and Thr193.

The protein belongs to the TRAFAC class OBG-HflX-like GTPase superfamily. OBG GTPase family. Monomer. The cofactor is Mg(2+).

The protein localises to the cytoplasm. An essential GTPase which binds GTP, GDP and possibly (p)ppGpp with moderate affinity, with high nucleotide exchange rates and a fairly low GTP hydrolysis rate. Plays a role in control of the cell cycle, stress response, ribosome biogenesis and in those bacteria that undergo differentiation, in morphogenesis control. The polypeptide is GTPase Obg (Zymomonas mobilis subsp. mobilis (strain ATCC 31821 / ZM4 / CP4)).